An 89-amino-acid chain; its full sequence is Putative protein p54 (89 aa).

The protein is Putative protein p54 (54) of Acyrthosiphon pisum secondary endosymbiont phage 1 (Bacteriophage APSE-1).